The sequence spans 118 residues: UPF0102 protein Dtur_1530 (118 aa).

It belongs to the UPF0102 family.

This is UPF0102 protein Dtur_1530 from Dictyoglomus turgidum (strain DSM 6724 / Z-1310).